We begin with the raw amino-acid sequence, 223 residues long: MEVKDILKTVDHTLLATTATWPEIQTILDDAMAYETASACIPASYVKKAAEYVSGKLAICTVIGFPNGYSTTAAKVFECQDAIQNGADEIDMVINLTDVKNGDFDTVEEEIRQIKAACQDHILKVIVETCQLTKEELIELCGVVTRSGADFIKTSTGFSTAGATFEDVEVMAKYVGEGVKIKAAGGISSLEDAKTFIALGASRLGTSRIIKIVKNEATKTDSY.

Asp91 functions as the Proton donor/acceptor in the catalytic mechanism. Lys153 (schiff-base intermediate with acetaldehyde) is an active-site residue. The Proton donor/acceptor role is filled by Lys182.

The protein belongs to the DeoC/FbaB aldolase family. DeoC type 1 subfamily.

It localises to the cytoplasm. The enzyme catalyses 2-deoxy-D-ribose 5-phosphate = D-glyceraldehyde 3-phosphate + acetaldehyde. The protein operates within carbohydrate degradation; 2-deoxy-D-ribose 1-phosphate degradation; D-glyceraldehyde 3-phosphate and acetaldehyde from 2-deoxy-alpha-D-ribose 1-phosphate: step 2/2. Catalyzes a reversible aldol reaction between acetaldehyde and D-glyceraldehyde 3-phosphate to generate 2-deoxy-D-ribose 5-phosphate. In Streptococcus pyogenes serotype M28 (strain MGAS6180), this protein is Deoxyribose-phosphate aldolase.